The sequence spans 402 residues: Putative RNA-guided DNA endonuclease InsQ (402 aa).

Active-site residues include Asp183 and Glu267. The Zn(2+) site is built by Cys334, Cys337, Cys353, and Cys356. Residue Asp363 is part of the active site.

This sequence in the N-terminal section; belongs to the transposase 2 family. The protein in the C-terminal section; belongs to the transposase 35 family.

Functionally, an RNA-guided dsDNA endonuclease. When guided by an RNA derived from the right-end element of its insertion sequence element (IS), cleaves DNA downstream of the transposon-associated motif (TAM). Cleaves supercoiled and linear DNA in a staggered manner 15-21 bases from the TAM yielding 5'-overhangs. Binds reRNA, an approximately 150 nucleotide base sRNA derived from the 3' end of its own gene, the right end (RE) of the insertion sequence (IS) plus sequence downstream of the IS. In terms of biological role, not required for transposition of the insertion element. The corresponding transposase in strains MG1655 and W3110 is a truncated pseudogene (yncK). In Escherichia coli (strain K12), this protein is Putative RNA-guided DNA endonuclease InsQ (insQ).